The chain runs to 265 residues: Ribosomal RNA small subunit methyltransferase A (265 aa).

The S-adenosyl-L-methionine site is built by histidine 13, leucine 15, glycine 40, glutamate 61, aspartate 85, and asparagine 103.

It belongs to the class I-like SAM-binding methyltransferase superfamily. rRNA adenine N(6)-methyltransferase family. RsmA subfamily.

It is found in the cytoplasm. The enzyme catalyses adenosine(1518)/adenosine(1519) in 16S rRNA + 4 S-adenosyl-L-methionine = N(6)-dimethyladenosine(1518)/N(6)-dimethyladenosine(1519) in 16S rRNA + 4 S-adenosyl-L-homocysteine + 4 H(+). Functionally, specifically dimethylates two adjacent adenosines (A1518 and A1519) in the loop of a conserved hairpin near the 3'-end of 16S rRNA in the 30S particle. May play a critical role in biogenesis of 30S subunits. The chain is Ribosomal RNA small subunit methyltransferase A from Bordetella bronchiseptica (strain ATCC BAA-588 / NCTC 13252 / RB50) (Alcaligenes bronchisepticus).